A 669-amino-acid chain; its full sequence is DNA ligase (669 aa).

NAD(+)-binding positions include 34 to 38, 83 to 84, and glutamate 114; these read DAEYD and SL. The active-site N6-AMP-lysine intermediate is the lysine 116. Residues arginine 137, glutamate 171, lysine 287, and lysine 311 each coordinate NAD(+). Zn(2+) contacts are provided by cysteine 405, cysteine 408, cysteine 423, and cysteine 428. Positions 591–669 constitute a BRCT domain; the sequence is NVESYFAGKT…EERFLQELNK (79 aa).

This sequence belongs to the NAD-dependent DNA ligase family. LigA subfamily. Requires Mg(2+) as cofactor. Mn(2+) serves as cofactor.

The enzyme catalyses NAD(+) + (deoxyribonucleotide)n-3'-hydroxyl + 5'-phospho-(deoxyribonucleotide)m = (deoxyribonucleotide)n+m + AMP + beta-nicotinamide D-nucleotide.. Its function is as follows. DNA ligase that catalyzes the formation of phosphodiester linkages between 5'-phosphoryl and 3'-hydroxyl groups in double-stranded DNA using NAD as a coenzyme and as the energy source for the reaction. It is essential for DNA replication and repair of damaged DNA. The protein is DNA ligase of Bacillus cereus (strain ATCC 14579 / DSM 31 / CCUG 7414 / JCM 2152 / NBRC 15305 / NCIMB 9373 / NCTC 2599 / NRRL B-3711).